The primary structure comprises 183 residues: Adenine phosphoribosyltransferase (183 aa).

Belongs to the purine/pyrimidine phosphoribosyltransferase family. As to quaternary structure, homodimer.

It localises to the cytoplasm. It catalyses the reaction AMP + diphosphate = 5-phospho-alpha-D-ribose 1-diphosphate + adenine. It participates in purine metabolism; AMP biosynthesis via salvage pathway; AMP from adenine: step 1/1. Functionally, catalyzes a salvage reaction resulting in the formation of AMP, that is energically less costly than de novo synthesis. In Salmonella gallinarum (strain 287/91 / NCTC 13346), this protein is Adenine phosphoribosyltransferase.